The sequence spans 193 residues: Inosine triphosphate pyrophosphatase (193 aa).

10–15 (TGNANK) is an ITP binding site. Residue E42 participates in Mg(2+) binding. Residues K54, 70-71 (DT), K87, 146-149 (FGWD), K169, and 174-175 (HR) each bind ITP.

Belongs to the HAM1 NTPase family. Homodimer. Requires Mg(2+) as cofactor. The cofactor is Mn(2+).

The protein resides in the cytoplasm. Its subcellular location is the nucleus. It carries out the reaction ITP + H2O = IMP + diphosphate + H(+). It catalyses the reaction dITP + H2O = dIMP + diphosphate + H(+). The catalysed reaction is XTP + H2O = XMP + diphosphate + H(+). In terms of biological role, pyrophosphatase that hydrolyzes non-canonical purine nucleotides such as inosine triphosphate (ITP), deoxyinosine triphosphate (dITP) or xanthosine 5'-triphosphate (XTP) to their respective monophosphate derivatives. The enzyme does not distinguish between the deoxy- and ribose forms. Probably excludes non-canonical purines from RNA and DNA precursor pools, thus preventing their incorporation into RNA and DNA and avoiding chromosomal lesions. In Mycosarcoma maydis (Corn smut fungus), this protein is Inosine triphosphate pyrophosphatase.